Here is a 67-residue protein sequence, read N- to C-terminus: Large ribosomal subunit protein bL32 (67 aa).

Basic residues predominate over residues 1 to 19; the sequence is MAVPKRKMSRSNTRSRRSQ. The tract at residues 1–22 is disordered; that stretch reads MAVPKRKMSRSNTRSRRSQWKA.

This sequence belongs to the bacterial ribosomal protein bL32 family.

This Kineococcus radiotolerans (strain ATCC BAA-149 / DSM 14245 / SRS30216) protein is Large ribosomal subunit protein bL32.